The following is a 132-amino-acid chain: Small ribosomal subunit protein uS8 (132 aa).

This sequence belongs to the universal ribosomal protein uS8 family. Part of the 30S ribosomal subunit. Contacts proteins S5 and S12.

Its function is as follows. One of the primary rRNA binding proteins, it binds directly to 16S rRNA central domain where it helps coordinate assembly of the platform of the 30S subunit. In Clostridium beijerinckii (strain ATCC 51743 / NCIMB 8052) (Clostridium acetobutylicum), this protein is Small ribosomal subunit protein uS8.